The sequence spans 92 residues: Auxin-responsive protein SAUR28 (92 aa).

It belongs to the ARG7 family. Higher expression in thermo-responsive cultivars (e.g. cv. Alst-1, cv. Ang-0 and cv. Com-0) than in low thermo-responsive cultivars (e.g. cv. Dja-1, cv. El-0 and cv. Kon).

The protein resides in the cell membrane. Functionally, functions as a positive effector of cell expansion through modulation of auxin transport. Involved in thermo-responsiveness of plant architecture. Enhances plasma membrane H(+)-ATPase. The sequence is that of Auxin-responsive protein SAUR28 from Arabidopsis thaliana (Mouse-ear cress).